We begin with the raw amino-acid sequence, 280 residues long: tRNA pseudouridine synthase A (280 aa).

Residue Asp60 is the Nucleophile of the active site. Tyr119 lines the substrate pocket.

Belongs to the tRNA pseudouridine synthase TruA family. Homodimer.

It catalyses the reaction uridine(38/39/40) in tRNA = pseudouridine(38/39/40) in tRNA. Functionally, formation of pseudouridine at positions 38, 39 and 40 in the anticodon stem and loop of transfer RNAs. The chain is tRNA pseudouridine synthase A from Treponema pallidum (strain Nichols).